Here is a 121-residue protein sequence, read N- to C-terminus: Large ribosomal subunit protein bL20 (121 aa).

This sequence belongs to the bacterial ribosomal protein bL20 family.

In terms of biological role, binds directly to 23S ribosomal RNA and is necessary for the in vitro assembly process of the 50S ribosomal subunit. It is not involved in the protein synthesizing functions of that subunit. This Methylorubrum populi (strain ATCC BAA-705 / NCIMB 13946 / BJ001) (Methylobacterium populi) protein is Large ribosomal subunit protein bL20.